Consider the following 174-residue polypeptide: 16S rRNA aminocarboxypropyltransferase (174 aa).

The S-adenosyl-L-methionine site is built by T26, L73, L97, and S116.

Belongs to the TDD superfamily. TSR3 family.

Its subcellular location is the cytoplasm. The enzyme catalyses an N(1)-methylpseudouridine in rRNA + S-adenosyl-L-methionine = N(1)-methyl-N(3)-[(3S)-3-amino-3-carboxypropyl]pseudouridine in rRNA + S-methyl-5'-thioadenosine + H(+). In terms of biological role, aminocarboxypropyltransferase that catalyzes the aminocarboxypropyl transfer on pseudouridine corresponding to position 914 in M.jannaschii 16S rRNA. It constitutes the last step in biosynthesis of the hypermodified N1-methyl-N3-(3-amino-3-carboxypropyl) pseudouridine (m1acp3-Psi). This chain is 16S rRNA aminocarboxypropyltransferase, found in Methanosarcina acetivorans (strain ATCC 35395 / DSM 2834 / JCM 12185 / C2A).